The sequence spans 61 residues: Small ribosomal subunit protein uS14 (61 aa).

Positions 24, 27, 40, and 43 each coordinate Zn(2+).

It belongs to the universal ribosomal protein uS14 family. Zinc-binding uS14 subfamily. In terms of assembly, part of the 30S ribosomal subunit. Contacts proteins S3 and S10. Zn(2+) serves as cofactor.

In terms of biological role, binds 16S rRNA, required for the assembly of 30S particles and may also be responsible for determining the conformation of the 16S rRNA at the A site. This chain is Small ribosomal subunit protein uS14, found in Campylobacter jejuni subsp. jejuni serotype O:6 (strain 81116 / NCTC 11828).